Here is a 353-residue protein sequence, read N- to C-terminus: Carbamoyl phosphate synthase small chain (353 aa).

The segment at 1 to 166 (MSDAYLALET…AETHGNGDTT (166 aa)) is CPSase. Residues serine 45, glycine 214, and glycine 216 each contribute to the L-glutamine site. The Glutamine amidotransferase type-1 domain occupies 166–349 (TVALVDCGAK…LAMADASYTP (184 aa)). Cysteine 241 acts as the Nucleophile in catalysis. Leucine 242, glutamine 245, asparagine 283, glycine 285, and tyrosine 286 together coordinate L-glutamine. Residues histidine 322 and glutamate 324 contribute to the active site.

This sequence belongs to the CarA family. As to quaternary structure, composed of two chains; the small (or glutamine) chain promotes the hydrolysis of glutamine to ammonia, which is used by the large (or ammonia) chain to synthesize carbamoyl phosphate. Tetramer of heterodimers (alpha,beta)4.

It catalyses the reaction hydrogencarbonate + L-glutamine + 2 ATP + H2O = carbamoyl phosphate + L-glutamate + 2 ADP + phosphate + 2 H(+). It carries out the reaction L-glutamine + H2O = L-glutamate + NH4(+). Its pathway is amino-acid biosynthesis; L-arginine biosynthesis; carbamoyl phosphate from bicarbonate: step 1/1. It participates in pyrimidine metabolism; UMP biosynthesis via de novo pathway; (S)-dihydroorotate from bicarbonate: step 1/3. Small subunit of the glutamine-dependent carbamoyl phosphate synthetase (CPSase). CPSase catalyzes the formation of carbamoyl phosphate from the ammonia moiety of glutamine, carbonate, and phosphate donated by ATP, constituting the first step of 2 biosynthetic pathways, one leading to arginine and/or urea and the other to pyrimidine nucleotides. The small subunit (glutamine amidotransferase) binds and cleaves glutamine to supply the large subunit with the substrate ammonia. The chain is Carbamoyl phosphate synthase small chain from Halobacterium salinarum (strain ATCC 29341 / DSM 671 / R1).